The sequence spans 473 residues: MKTDTPSLETPQAARLRRRQLIRQLLERDKTPLAILFMAAVVGTLVGLAAVAFDKGVAWLQNQRMGALVHTADNYPLLLTVAFLCSAVLAMFGYFLVRKYAPEAGGSGIPEIEGALEDQRPVRWWRVLPVKFFGGLGTLGGGMVLGREGPTVQIGGNIGRMVLDVFRLKGDEARHTLLATGAAAGLAAAFNAPLAGILFIIEEMRPQFRYTLISIKAVFIGVIMSTIMYRIFNHEVALIDVGKLSDAPLNTLWLYLILGIIFGIFGPIFNKWVLGMQDLLHRVHGGNITKWVLMGGAIGGLCGLLGFVAPATSGGGFNLIPIATAGNFSMGMLVFIFVARVITTLLCFSSGAPGGIFAPMLALGTVLGTAFGMVAVELFPQYHLEAGTFAIAGMGALLAASIRAPLTGIILVLEMTDNYQLILPMIITGLGATLLAQFTGGKPLYSAILARTLAKQEAEQLARSKAASARENT.

Topologically, residues 1 to 32 are cytoplasmic; it reads MKTDTPSLETPQAARLRRRQLIRQLLERDKTP. Residues 33 to 69 form a helical membrane-spanning segment; that stretch reads LAILFMAAVVGTLVGLAAVAFDKGVAWLQNQRMGALV. Residues 70 to 76 lie on the Periplasmic side of the membrane; it reads HTADNYP. The chain crosses the membrane as a helical span at residues 77 to 100; that stretch reads LLLTVAFLCSAVLAMFGYFLVRKY. A Selectivity filter part_1 motif is present at residues 106–110; the sequence is GSGIP. Position 107 (serine 107) interacts with chloride. The helical intramembrane region spans 109–116; sequence IPEIEGAL. The Cytoplasmic portion of the chain corresponds to 117-123; it reads EDQRPVR. 2 consecutive transmembrane segments (helical) span residues 124–141 and 148–166; these read WWRV…TLGG and EGPT…LDVF. The Selectivity filter part_2 signature appears at 146-150; the sequence is GREGP. At 167–176 the chain is on the cytoplasmic side; sequence RLKGDEARHT. 2 intramembrane regions (helical) span residues 177-189 and 193-201; these read LLAT…LAAA and PLAGILFII. Topologically, residues 202-214 are cytoplasmic; the sequence is EEMRPQFRYTLIS. A helical membrane pass occupies residues 215 to 232; sequence IKAVFIGVIMSTIMYRIF. The Periplasmic segment spans residues 233–252; sequence NHEVALIDVGKLSDAPLNTL. The chain crosses the membrane as a helical span at residues 253–281; it reads WLYLILGIIFGIFGPIFNKWVLGMQDLLH. The Cytoplasmic portion of the chain corresponds to 282 to 287; that stretch reads RVHGGN. The chain crosses the membrane as a helical span at residues 288–309; sequence ITKWVLMGGAIGGLCGLLGFVA. The Periplasmic segment spans residues 310-329; that stretch reads PATSGGGFNLIPIATAGNFS. 2 consecutive transmembrane segments (helical) span residues 330–349 and 355–376; these read MGML…LCFS and GIFA…MVAV. The short motif at 355–359 is the Selectivity filter part_3 element; that stretch reads GIFAP. Positions 356 and 357 each coordinate chloride. The Periplasmic segment spans residues 377-386; sequence ELFPQYHLEA. Residues 387–401 constitute an intramembrane region (helical); sequence GTFAIAGMGALLAAS. The note=Loop between two helices intramembrane region spans 402-404; that stretch reads IRA. Positions 405–416 form an intramembrane region, helical; that stretch reads PLTGIILVLEMT. Residues 417–421 constitute an intramembrane region (note=Loop between two helices); sequence DNYQL. The chain crosses the membrane as a helical span at residues 422-438; that stretch reads ILPMIITGLGATLLAQF. Over 439 to 473 the chain is Cytoplasmic; sequence TGGKPLYSAILARTLAKQEAEQLARSKAASARENT. Residue tyrosine 445 coordinates chloride.

The protein belongs to the chloride channel (TC 2.A.49) family. ClcA subfamily. As to quaternary structure, homodimer.

Its subcellular location is the cell inner membrane. The catalysed reaction is 2 chloride(in) + H(+)(out) = 2 chloride(out) + H(+)(in). Its function is as follows. Proton-coupled chloride transporter. Functions as antiport system and exchanges two chloride ions for 1 proton. Probably acts as an electrical shunt for an outwardly-directed proton pump that is linked to amino acid decarboxylation, as part of the extreme acid resistance (XAR) response. The chain is H(+)/Cl(-) exchange transporter ClcA from Escherichia coli O45:K1 (strain S88 / ExPEC).